The primary structure comprises 450 residues: MSLRLSSASRRSCPRPTTGSLRLYGGGTSFGTGNSCGISGIGSGFSSAFGGSSSGGNTGGGNPCAGFTVNERGLLSGNEKVTMQNLNDRLASYLDSVHALEEANADLEQKIKGWYEKFGPGSCRGLDHDYSRYFPIIDDLKNQIIASTTSNANAVLQIDNARLTADDFRLKYENELALHQSVEADVNGLRRVLDEITLCRTDLEIQYETLSEEMTYLKKNHKEEMQVLQCAAGGNVNVEMNAAPGVDLTVLLNNMRAEYEALAEQNRRDAEAWFNEKSASLQQQISEDVGATTSARNELTEMKRTLQTLEIELQSLLATKHSLECSLTETESNYCAQLAQIQAQIGALEEQLHQVRTETEGQKLEYEQLLDIKLHLEKEIETYCLLIGGDDGACKSGGYKSKDYGSGNVGSQVKDPAKAIVVKKVLEEVDQRSKILTTRLHSLEEKSQSN.

The span at 1–11 (MSLRLSSASRR) shows a compositional bias: low complexity. The tract at residues 1-20 (MSLRLSSASRRSCPRPTTGS) is disordered. Positions 1–78 (MSLRLSSASR…VNERGLLSGN (78 aa)) are head. Residues 79 to 114 (EKVTMQNLNDRLASYLDSVHALEEANADLEQKIKGW) form a coil 1A region. In terms of domain architecture, IF rod spans 79 to 394 (EKVTMQNLND…LLIGGDDGAC (316 aa)). A linker 1 region spans residues 115 to 136 (YEKFGPGSCRGLDHDYSRYFPI). The interval 137 to 228 (IDDLKNQIIA…KNHKEEMQVL (92 aa)) is coil 1B. The segment at 229 to 251 (QCAAGGNVNVEMNAAPGVDLTVL) is linker 12. Residues 252–390 (LNNMRAEYEA…ETYCLLIGGD (139 aa)) form a coil 2 region. Positions 391 to 450 (DGACKSGGYKSKDYGSGNVGSQVKDPAKAIVVKKVLEEVDQRSKILTTRLHSLEEKSQSN) are tail. Serine 442 is modified (phosphoserine).

Belongs to the intermediate filament family. Heterodimer of a type I and a type II keratin. Heterodimer with type II keratin KRT5 leading to the formation of keratin intermediate filament (KIF) network. Interacts with KRT6A to form filaments. In terms of tissue distribution, strongly expressed in skin and scalp, and weak expression observed in thymus and tongue. In the hair follicle, expressed in Henle layer, Huxley layer and in the inner root sheath cuticle of the hair follicle. Expression extends from the bulb region up to the point of differentiation into the three layers. Also present in the medulla of beard hair (at protein level).

It localises to the cytoplasm. Essential for the proper assembly of type I and type II keratin protein complexes and formation of keratin intermediate filaments in the inner root sheath (irs). Plays a role in the cytoskeleton organization. The chain is Keratin, type I cytoskeletal 25 from Homo sapiens (Human).